The following is a 668-amino-acid chain: UvrABC system protein B (668 aa).

Positions 36–276 (DNIKGGEKAQ…EEAIKNIMEE (241 aa)) constitute a Helicase ATP-binding domain. An ATP-binding site is contributed by 49-56 (GATGTGKT). The Beta-hairpin motif lies at 102–125 (YYDYYQPEAYVPSSDTYIEKDSSV). Residues 440-606 (QMDDLLGEIN…TIKKEIRDLI (167 aa)) enclose the Helicase C-terminal domain. Positions 632–667 (QEAIKKLQKQMHEAAELLDFELAAQIRDMVLELKSM) constitute a UVR domain.

Belongs to the UvrB family. Forms a heterotetramer with UvrA during the search for lesions. Interacts with UvrC in an incision complex.

The protein resides in the cytoplasm. In terms of biological role, the UvrABC repair system catalyzes the recognition and processing of DNA lesions. A damage recognition complex composed of 2 UvrA and 2 UvrB subunits scans DNA for abnormalities. Upon binding of the UvrA(2)B(2) complex to a putative damaged site, the DNA wraps around one UvrB monomer. DNA wrap is dependent on ATP binding by UvrB and probably causes local melting of the DNA helix, facilitating insertion of UvrB beta-hairpin between the DNA strands. Then UvrB probes one DNA strand for the presence of a lesion. If a lesion is found the UvrA subunits dissociate and the UvrB-DNA preincision complex is formed. This complex is subsequently bound by UvrC and the second UvrB is released. If no lesion is found, the DNA wraps around the other UvrB subunit that will check the other stand for damage. This is UvrABC system protein B from Streptococcus thermophilus (strain ATCC BAA-491 / LMD-9).